Here is a 396-residue protein sequence, read N- to C-terminus: Lipid-A-disaccharide synthase (396 aa).

Belongs to the LpxB family.

It catalyses the reaction a lipid X + a UDP-2-N,3-O-bis[(3R)-3-hydroxyacyl]-alpha-D-glucosamine = a lipid A disaccharide + UDP + H(+). Its pathway is bacterial outer membrane biogenesis; LPS lipid A biosynthesis. Condensation of UDP-2,3-diacylglucosamine and 2,3-diacylglucosamine-1-phosphate to form lipid A disaccharide, a precursor of lipid A, a phosphorylated glycolipid that anchors the lipopolysaccharide to the outer membrane of the cell. The polypeptide is Lipid-A-disaccharide synthase (Rhodopseudomonas palustris (strain BisB18)).